The sequence spans 1837 residues: Nucleoporin nup211 (1837 aa).

Coiled coils occupy residues 59–378, 415–519, and 559–625; these read EVNY…YDEI, YKQK…ELDL, and VFRN…QLRY. T650 is modified (phosphothreonine). Coiled coils occupy residues 661–1163, 1222–1637, and 1675–1712; these read EQTS…NKLL, LDNR…ENTH, and KAKI…PEKT. The interval 1464 to 1521 is disordered; that stretch reads KDSNHQLQESASSDAEQITKEQFEQLKSEKERTEKELADSKNELEHLQSEAVDADGKT. The segment covering 1468 to 1479 has biased composition (polar residues); that stretch reads HQLQESASSDAE. The span at 1480-1521 shows a compositional bias: basic and acidic residues; sequence QITKEQFEQLKSEKERTEKELADSKNELEHLQSEAVDADGKT. S1558 bears the Phosphoserine mark. T1560 is modified (phosphothreonine). S1563 is subject to Phosphoserine. 2 disordered regions span residues 1602-1642 and 1700-1837; these read EKEK…NIDD and ENLN…KKAK. The span at 1617 to 1628 shows a compositional bias: basic and acidic residues; that stretch reads KSQRIKELEEQA. Polar residues-rich tracts occupy residues 1700 to 1730, 1753 to 1763, 1795 to 1814, and 1827 to 1837; these read ENLN…SKPT, KSLSARLQGTG, IATS…TAKS, and GGSSSNQKKAK.

The protein localises to the cytoplasm. Its subcellular location is the nucleus. Its function is as follows. Functions as a component of the nuclear pore complex (NPC). NPC components, collectively referred to as nucleoporins (NUPs), can play the role of both NPC structural components and of docking or interaction partners for transiently associated nuclear transport factors. Active directional transport is assured by both, a Phe-Gly (FG) repeat affinity gradient for these transport factors across the NPC and a transport cofactor concentration gradient across the nuclear envelope. The chain is Nucleoporin nup211 (nup211) from Schizosaccharomyces pombe (strain 972 / ATCC 24843) (Fission yeast).